We begin with the raw amino-acid sequence, 123 residues long: Small ribosomal subunit protein uS12cz/uS12cy (123 aa).

It belongs to the universal ribosomal protein uS12 family. In terms of assembly, part of the 30S ribosomal subunit.

The protein localises to the plastid. The protein resides in the chloroplast. With S4 and S5 plays an important role in translational accuracy. Located at the interface of the 30S and 50S subunits. The protein is Small ribosomal subunit protein uS12cz/uS12cy (rps12-A) of Nandina domestica (Heavenly bamboo).